We begin with the raw amino-acid sequence, 357 residues long: tRNA N6-adenosine threonylcarbamoyltransferase (357 aa).

Fe cation is bound by residues H113 and H117. Substrate is bound by residues L136–G140, D169, G182, and N288. Residue D316 coordinates Fe cation.

Belongs to the KAE1 / TsaD family. Fe(2+) serves as cofactor.

Its subcellular location is the cytoplasm. It catalyses the reaction L-threonylcarbamoyladenylate + adenosine(37) in tRNA = N(6)-L-threonylcarbamoyladenosine(37) in tRNA + AMP + H(+). Required for the formation of a threonylcarbamoyl group on adenosine at position 37 (t(6)A37) in tRNAs that read codons beginning with adenine. Is involved in the transfer of the threonylcarbamoyl moiety of threonylcarbamoyl-AMP (TC-AMP) to the N6 group of A37, together with TsaE and TsaB. TsaD likely plays a direct catalytic role in this reaction. In Gemmatimonas aurantiaca (strain DSM 14586 / JCM 11422 / NBRC 100505 / T-27), this protein is tRNA N6-adenosine threonylcarbamoyltransferase.